Reading from the N-terminus, the 225-residue chain is UPF0128 protein PH1314 (225 aa).

This sequence belongs to the UPF0128 family.

The protein is UPF0128 protein PH1314 of Pyrococcus horikoshii (strain ATCC 700860 / DSM 12428 / JCM 9974 / NBRC 100139 / OT-3).